A 396-amino-acid polypeptide reads, in one-letter code: MYIDTSASSRMTDNKGSVITINGGESAGNSPPSQRKSSTSESPPELRILCFDLTYYNRTTQFLLSCAGVFFLYILYGYLQELIFTVEGFKPYGWFLTLVQFGYYIGFGLVERRLEGYRISGGSFWNIEPEPRCIPMRTYLILAALTLGTMGLSNSSLGYLNYPTQVIFKCCKLIPVLVGSILIQGKRYGLLDFAAATCMCIGLAWFTLADSQMTPNFNLLGVAMISGALLCDAAIGNVQEKAMREFKAPSSEVVFYSYGLGFVYLFVIMLVTGNFFSGFAFCLEHPVETFGYGFLFSLSGYLGIQFVLALVRSSGAPIAATVTTARKAVTIAFSFVLFSKPFTLQYLWSGLIVVLGIYLNVYSKRNKLTLADVRQRIKQFGAKVARSPSRKFLIEV.

Positions 22–42 (NGGESAGNSPPSQRKSSTSES) are disordered. Residues 27 to 42 (AGNSPPSQRKSSTSES) are compositionally biased toward polar residues. A phosphoserine mark is found at serine 37 and serine 40. N-linked (GlcNAc...) asparagine glycosylation is present at asparagine 57. Transmembrane regions (helical) follow at residues 66–86 (CAGVFFLYILYGYLQELIFTV), 91–111 (PYGWFLTLVQFGYYIGFGLVE), 140–160 (LILAALTLGTMGLSNSSLGYL), 163–183 (PTQVIFKCCKLIPVLVGSILI), 189–209 (GLLDFAAATCMCIGLAWFTLA), 216–236 (NFNLLGVAMISGALLCDAAIG), 253–273 (VVFYSYGLGFVYLFVIMLVTG), 290–310 (FGYGFLFSLSGYLGIQFVLAL), 318–338 (IAATVTTARKAVTIAFSFVLF), and 342–362 (FTLQYLWSGLIVVLGIYLNVY).

Belongs to the nucleotide-sugar transporter family. SLC35B subfamily.

It localises to the golgi apparatus membrane. In terms of biological role, mediates the transport of adenosine 3'-phospho 5'-phosphosulfate (PAPS), from cytosol into Golgi. PAPS is a universal sulfuryl donor for sulfation events that take place in the Golgi. Essential for viability. Involved in glycosaminoglycan synthesis and the subsequent signaling. May be involved in hh and dpp signaling by controlling the sulfation of heparan sulfate (HS). The polypeptide is Adenosine 3'-phospho 5'-phosphosulfate transporter 2 (Papst2) (Drosophila melanogaster (Fruit fly)).